We begin with the raw amino-acid sequence, 436 residues long: Trigger factor (436 aa).

Residues 161-246 (GDQVIVDFDG…VREVKEPTLP (86 aa)) enclose the PPIase FKBP-type domain.

It belongs to the FKBP-type PPIase family. Tig subfamily.

It localises to the cytoplasm. The enzyme catalyses [protein]-peptidylproline (omega=180) = [protein]-peptidylproline (omega=0). In terms of biological role, involved in protein export. Acts as a chaperone by maintaining the newly synthesized protein in an open conformation. Functions as a peptidyl-prolyl cis-trans isomerase. The sequence is that of Trigger factor from Thioalkalivibrio sulfidiphilus (strain HL-EbGR7).